Reading from the N-terminus, the 761-residue chain is Phosphoribosylformylglycinamidine synthase subunit PurL (761 aa).

The active site involves His-49. Residues Tyr-52 and Lys-92 each contribute to the ATP site. Glu-94 serves as a coordination point for Mg(2+). Residues 95 to 98 and Arg-117 contribute to the substrate site; that span reads SHNH. His-96 acts as the Proton acceptor in catalysis. Residue Asp-118 participates in Mg(2+) binding. Gln-241 serves as a coordination point for substrate. Asp-269 contributes to the Mg(2+) binding site. 318–320 is a substrate binding site; it reads ESQ. ATP is bound by residues Asn-502 and Gly-539. Asn-540 serves as a coordination point for Mg(2+). Substrate is bound at residue Ser-542.

The protein belongs to the FGAMS family. As to quaternary structure, monomer. Part of the FGAM synthase complex composed of 1 PurL, 1 PurQ and 2 PurS subunits.

The protein resides in the cytoplasm. It catalyses the reaction N(2)-formyl-N(1)-(5-phospho-beta-D-ribosyl)glycinamide + L-glutamine + ATP + H2O = 2-formamido-N(1)-(5-O-phospho-beta-D-ribosyl)acetamidine + L-glutamate + ADP + phosphate + H(+). It participates in purine metabolism; IMP biosynthesis via de novo pathway; 5-amino-1-(5-phospho-D-ribosyl)imidazole from N(2)-formyl-N(1)-(5-phospho-D-ribosyl)glycinamide: step 1/2. In terms of biological role, part of the phosphoribosylformylglycinamidine synthase complex involved in the purines biosynthetic pathway. Catalyzes the ATP-dependent conversion of formylglycinamide ribonucleotide (FGAR) and glutamine to yield formylglycinamidine ribonucleotide (FGAM) and glutamate. The FGAM synthase complex is composed of three subunits. PurQ produces an ammonia molecule by converting glutamine to glutamate. PurL transfers the ammonia molecule to FGAR to form FGAM in an ATP-dependent manner. PurS interacts with PurQ and PurL and is thought to assist in the transfer of the ammonia molecule from PurQ to PurL. The chain is Phosphoribosylformylglycinamidine synthase subunit PurL from Chlorobium luteolum (strain DSM 273 / BCRC 81028 / 2530) (Pelodictyon luteolum).